The chain runs to 353 residues: Photosystem II D2 protein (353 aa).

Threonine 2 is subject to N-acetylthreonine. Threonine 2 carries the phosphothreonine modification. The helical transmembrane segment at cysteine 41–threonine 61 threads the bilayer. Histidine 118 is a chlorophyll a binding site. The helical transmembrane segment at glycine 125 to proline 141 threads the bilayer. The pheophytin a site is built by glutamine 130 and asparagine 143. The helical transmembrane segment at valine 153–serine 166 threads the bilayer. Histidine 198 provides a ligand contact to chlorophyll a. Residues alanine 208–aspartate 228 traverse the membrane as a helical segment. 2 residues coordinate a plastoquinone: histidine 215 and phenylalanine 262. Residue histidine 215 participates in Fe cation binding. Fe cation is bound at residue histidine 269. A helical transmembrane segment spans residues glycine 279–arginine 295.

It belongs to the reaction center PufL/M/PsbA/D family. As to quaternary structure, PSII is composed of 1 copy each of membrane proteins PsbA, PsbB, PsbC, PsbD, PsbE, PsbF, PsbH, PsbI, PsbJ, PsbK, PsbL, PsbM, PsbT, PsbX, PsbY, PsbZ, Psb30/Ycf12, at least 3 peripheral proteins of the oxygen-evolving complex and a large number of cofactors. It forms dimeric complexes. The D1/D2 heterodimer binds P680, chlorophylls that are the primary electron donor of PSII, and subsequent electron acceptors. It shares a non-heme iron and each subunit binds pheophytin, quinone, additional chlorophylls, carotenoids and lipids. There is also a Cl(-1) ion associated with D1 and D2, which is required for oxygen evolution. The PSII complex binds additional chlorophylls, carotenoids and specific lipids. serves as cofactor.

It localises to the plastid. The protein localises to the chloroplast thylakoid membrane. It carries out the reaction 2 a plastoquinone + 4 hnu + 2 H2O = 2 a plastoquinol + O2. In terms of biological role, photosystem II (PSII) is a light-driven water:plastoquinone oxidoreductase that uses light energy to abstract electrons from H(2)O, generating O(2) and a proton gradient subsequently used for ATP formation. It consists of a core antenna complex that captures photons, and an electron transfer chain that converts photonic excitation into a charge separation. The D1/D2 (PsbA/PsbD) reaction center heterodimer binds P680, the primary electron donor of PSII as well as several subsequent electron acceptors. D2 is needed for assembly of a stable PSII complex. The protein is Photosystem II D2 protein of Phalaenopsis aphrodite subsp. formosana (Moth orchid).